The sequence spans 434 residues: ATP-dependent protease ATPase subunit HslU (434 aa).

Residues Val18, 60-65 (GVGKTE), Asp247, Glu312, and Arg384 each bind ATP.

The protein belongs to the ClpX chaperone family. HslU subfamily. In terms of assembly, a double ring-shaped homohexamer of HslV is capped on each side by a ring-shaped HslU homohexamer. The assembly of the HslU/HslV complex is dependent on binding of ATP.

The protein localises to the cytoplasm. ATPase subunit of a proteasome-like degradation complex; this subunit has chaperone activity. The binding of ATP and its subsequent hydrolysis by HslU are essential for unfolding of protein substrates subsequently hydrolyzed by HslV. HslU recognizes the N-terminal part of its protein substrates and unfolds these before they are guided to HslV for hydrolysis. The sequence is that of ATP-dependent protease ATPase subunit HslU from Bradyrhizobium diazoefficiens (strain JCM 10833 / BCRC 13528 / IAM 13628 / NBRC 14792 / USDA 110).